A 1299-amino-acid chain; its full sequence is DExH-box ATP-dependent RNA helicase DExH6 (1299 aa).

The 68-residue stretch at 15 to 82 folds into the R3H domain; that stretch reads PTSVEATRIW…QRRLSIFKSR (68 aa). The Helicase ATP-binding domain maps to 197–366; the sequence is TSAVESNQVI…FGGCPVVRVP (170 aa). Position 210 to 217 (210 to 217) interacts with ATP; the sequence is GETGCGKT. Residues 313 to 316 carry the DEIH box motif; that stretch reads DEIH. Residues 537–711 enclose the Helicase C-terminal domain; it reads LIQQLMRKIC…ELCLQVKILD (175 aa). 2 disordered regions span residues 987 to 1039 and 1175 to 1299; these read PTGS…MMSS and IPRQ…AEQK. The span at 992 to 1006 shows a compositional bias: acidic residues; it reads DSDDSNEEEEDDEEV. The span at 1007–1020 shows a compositional bias: low complexity; it reads AANTNEEVAANTNE. The segment covering 1023-1032 has biased composition (basic and acidic residues); that stretch reads MDIHKEESRR. Polar residues-rich tracts occupy residues 1176–1193, 1204–1214, and 1239–1251; these read PRQQNYKQRNPKATNNTD, NPTNRINQPEA, and PSDQAYGNKQHNT. A Bipartite nuclear localization signal motif is present at residues 1182–1200; sequence KQRNPKATNNTDSGKKKEK. The Bipartite nuclear localization signal motif lies at 1267 to 1283; the sequence is KKTKTRSGNNSDSGKKK. Residues 1279–1299 show a composition bias toward basic and acidic residues; that stretch reads SGKKKEQYIPKRQREDKAEQK.

It belongs to the DExH box helicase family. In terms of tissue distribution, specifically expressed in the tapetum and vascular tissues.

The protein resides in the nucleus. The enzyme catalyses ATP + H2O = ADP + phosphate + H(+). Its function is as follows. May function as an ATP-dependent RNA/DNA helicase. In Arabidopsis thaliana (Mouse-ear cress), this protein is DExH-box ATP-dependent RNA helicase DExH6.